We begin with the raw amino-acid sequence, 245 residues long: Probable ABC transporter permease protein HI_0355 (245 aa).

Helical transmembrane passes span 9 to 29 (LLIV…GSFP), 61 to 81 (ICLG…LLSF), 92 to 112 (ILVI…VLWF), 115 to 135 (GMAS…TAAC), 170 to 190 (LPAF…GAVV), and 217 to 237 (FAAL…IDWL). The region spanning 50-234 (LWQHTQVTLL…SISLCLYFSI (185 aa)) is the ABC transmembrane type-1 domain.

The protein belongs to the binding-protein-dependent transport system permease family. CysTW subfamily.

It localises to the cell inner membrane. Probably part of a binding-protein-dependent transport system. Probably responsible for the translocation of the substrate across the membrane. The sequence is that of Probable ABC transporter permease protein HI_0355 from Haemophilus influenzae (strain ATCC 51907 / DSM 11121 / KW20 / Rd).